The following is a 309-amino-acid chain: Homoserine O-succinyltransferase (309 aa).

Cysteine 142 serves as the catalytic Acyl-thioester intermediate. Positions 163 and 192 each coordinate substrate. Histidine 235 acts as the Proton acceptor in catalysis. The active site involves glutamate 237. Residue arginine 249 coordinates substrate.

It belongs to the MetA family.

It localises to the cytoplasm. The catalysed reaction is L-homoserine + succinyl-CoA = O-succinyl-L-homoserine + CoA. The protein operates within amino-acid biosynthesis; L-methionine biosynthesis via de novo pathway; O-succinyl-L-homoserine from L-homoserine: step 1/1. Functionally, transfers a succinyl group from succinyl-CoA to L-homoserine, forming succinyl-L-homoserine. In Klebsiella pneumoniae (strain 342), this protein is Homoserine O-succinyltransferase.